We begin with the raw amino-acid sequence, 154 residues long: Urease accessory protein UreE (154 aa).

This sequence belongs to the UreE family.

It is found in the cytoplasm. Involved in urease metallocenter assembly. Binds nickel. Probably functions as a nickel donor during metallocenter assembly. This Rhizobium meliloti (strain 1021) (Ensifer meliloti) protein is Urease accessory protein UreE.